The primary structure comprises 199 residues: NAD(P)H dehydrogenase (quinone) (199 aa).

Residues 4-190 (ILVLYYSSWG…EGARFQGKRL (187 aa)) form the Flavodoxin-like domain. Residues 10-15 (SSWGHM) and 78-80 (TRY) contribute to the FMN site. NAD(+) is bound at residue tryptophan 12. Tryptophan 98 serves as a coordination point for substrate. FMN contacts are provided by residues 113–119 (STATQHG) and histidine 134. Positions 155 to 175 (VRGGAPYGMTTTSDTDGSRMP) are disordered.

This sequence belongs to the WrbA family. It depends on FMN as a cofactor.

It carries out the reaction a quinone + NADH + H(+) = a quinol + NAD(+). The enzyme catalyses a quinone + NADPH + H(+) = a quinol + NADP(+). The polypeptide is NAD(P)H dehydrogenase (quinone) (Chelativorans sp. (strain BNC1)).